The sequence spans 207 residues: Large ribosomal subunit protein uL3c (207 aa).

Residues 129–148 (TRGPMTHGSKNHRAPGSIGM) form a disordered region.

Belongs to the universal ribosomal protein uL3 family. As to quaternary structure, part of the 50S ribosomal subunit.

Its subcellular location is the plastid. It localises to the chloroplast. In terms of biological role, one of the primary rRNA binding proteins, it binds directly near the 3'-end of the 23S rRNA, where it nucleates assembly of the 50S subunit. The chain is Large ribosomal subunit protein uL3c (rpl3) from Phaeodactylum tricornutum (strain CCAP 1055/1).